The sequence spans 859 residues: Leucine--tRNA ligase (859 aa).

The 'HIGH' region signature appears at Pro-42–His-52. The 'KMSKS' region motif lies at Lys-618–Ser-622. Residue Lys-621 participates in ATP binding.

This sequence belongs to the class-I aminoacyl-tRNA synthetase family.

Its subcellular location is the cytoplasm. The catalysed reaction is tRNA(Leu) + L-leucine + ATP = L-leucyl-tRNA(Leu) + AMP + diphosphate. The sequence is that of Leucine--tRNA ligase from Shewanella sp. (strain MR-7).